The sequence spans 450 residues: tRNA modification GTPase MnmE (450 aa).

(6S)-5-formyl-5,6,7,8-tetrahydrofolate contacts are provided by Arg-20, Glu-78, and Lys-117. A TrmE-type G domain is found at 211 to 372 (GFRMVIVGKP…LEEAIYRETQ (162 aa)). Asn-221 is a K(+) binding site. Residues 221–226 (NVGKST), 240–246 (TDIPGTT), and 265–268 (DTAG) contribute to the GTP site. Ser-225 contributes to the Mg(2+) binding site. Positions 240, 242, and 245 each coordinate K(+). A Mg(2+)-binding site is contributed by Thr-246. Lys-450 contributes to the (6S)-5-formyl-5,6,7,8-tetrahydrofolate binding site.

It belongs to the TRAFAC class TrmE-Era-EngA-EngB-Septin-like GTPase superfamily. TrmE GTPase family. As to quaternary structure, homodimer. Heterotetramer of two MnmE and two MnmG subunits. K(+) is required as a cofactor.

It localises to the cytoplasm. Its function is as follows. Exhibits a very high intrinsic GTPase hydrolysis rate. Involved in the addition of a carboxymethylaminomethyl (cmnm) group at the wobble position (U34) of certain tRNAs, forming tRNA-cmnm(5)s(2)U34. This chain is tRNA modification GTPase MnmE, found in Thermotoga petrophila (strain ATCC BAA-488 / DSM 13995 / JCM 10881 / RKU-1).